Here is a 218-residue protein sequence, read N- to C-terminus: Glutathione S-transferase class-mu 26 kDa isozyme (218 aa).

Residues 2–83 enclose the GST N-terminal domain; it reads SPILGYWKIK…YIADKHNMLG (82 aa). Residues 7-8, 41-45, 54-55, and 67-68 each bind glutathione; these read YW, WRNKK, NL, and QS. The GST C-terminal domain occupies 85 to 203; that stretch reads CPKERAEISM…KSSKYIAWPL (119 aa). Substrate is bound at residue Tyr-111.

The protein belongs to the GST superfamily. Mu family. As to quaternary structure, homodimer.

It carries out the reaction RX + glutathione = an S-substituted glutathione + a halide anion + H(+). Conjugation of reduced glutathione to a wide number of exogenous and endogenous hydrophobic electrophiles. Functionally, GST isoenzymes appear to play a central role in the parasite detoxification system. Other functions are also suspected including a role in increasing the solubility of haematin in the parasite gut. This Schistosoma japonicum (Blood fluke) protein is Glutathione S-transferase class-mu 26 kDa isozyme.